The following is a 201-amino-acid chain: Guanylyl cyclase-activating protein 1 (201 aa).

The N-myristoyl glycine moiety is linked to residue glycine 2. Asparagine 3 is subject to Deamidated asparagine. EF-hand domains lie at 31-49 (SGQL…KNLS), 51-86 (SASQ…VLKG), 87-122 (KVEQ…IRAI), and 131-166 (TAEE…DQML). Aspartate 64, asparagine 66, aspartate 68, tyrosine 70, glutamate 75, aspartate 100, aspartate 102, asparagine 104, cysteine 106, glutamate 111, aspartate 144, asparagine 146, aspartate 148, glutamate 150, and glutamate 155 together coordinate Ca(2+).

As to quaternary structure, homodimer. As to expression, in the retina, it is expressed in rod and cone photoreceptors.

The protein localises to the membrane. It is found in the photoreceptor inner segment. The protein resides in the cell projection. Its subcellular location is the cilium. It localises to the photoreceptor outer segment. Stimulates retinal guanylyl cyclase when free calcium ions concentration is low and inhibits guanylyl cyclase when free calcium ions concentration is elevated. This Ca(2+)-sensitive regulation of retinal guanylyl cyclase is a key event in recovery of the dark state of rod photoreceptors following light exposure. May be involved in cone photoreceptor light response and recovery of response in bright light. The polypeptide is Guanylyl cyclase-activating protein 1 (GUCA1A) (Homo sapiens (Human)).